Here is a 152-residue protein sequence, read N- to C-terminus: Ribosome maturation factor RimP (152 aa).

This sequence belongs to the RimP family.

It localises to the cytoplasm. Functionally, required for maturation of 30S ribosomal subunits. The protein is Ribosome maturation factor RimP of Porphyromonas gingivalis (strain ATCC 33277 / DSM 20709 / CIP 103683 / JCM 12257 / NCTC 11834 / 2561).